The sequence spans 210 residues: Large ribosomal subunit protein uL3 (210 aa).

The interval 122-155 (NQKRNNFGRGPMSHGSKNHRAPGSIGAGTTPGRV) is disordered.

The protein belongs to the universal ribosomal protein uL3 family. In terms of assembly, part of the 50S ribosomal subunit. Forms a cluster with proteins L14 and L19.

Its function is as follows. One of the primary rRNA binding proteins, it binds directly near the 3'-end of the 23S rRNA, where it nucleates assembly of the 50S subunit. This Nostoc punctiforme (strain ATCC 29133 / PCC 73102) protein is Large ribosomal subunit protein uL3.